We begin with the raw amino-acid sequence, 370 residues long: Aldo-keto reductase NECHADRAFT_45914 (370 aa).

Position 78 (aspartate 78) interacts with NADP(+). The Proton donor role is filled by tyrosine 83. Histidine 174 is a substrate binding site. NADP(+) contacts are provided by residues 204–205, glutamine 230, 259–269, and 333–341; these read SS, APLASGRLARR, and STVQRIEEA.

This sequence belongs to the aldo/keto reductase family.

It functions in the pathway secondary metabolite biosynthesis. In terms of biological role, aldo-keto reductase; part of the gene cluster that mediates the biosynthesis of sansalvamide, a cyclic pentadepsipeptide that shows promising results as potential anti-cancer drug. The nonribosmal peptide synthetase NRPS30 produces sansalvamide by incorporating successively one phenylalanine, one leucine, one alpha-hydroxyisocaproic acid (HICA), one valine and one leucine before sansalvamide is released from by cyclization by the terminal C domain of NRPS30. The HICA residue is probably provided by reduction of alpha-ketoisocaproate by the cluster-specific aldo-keto reductase (NECHADRAFT_45914). This Fusarium vanettenii (strain ATCC MYA-4622 / CBS 123669 / FGSC 9596 / NRRL 45880 / 77-13-4) (Fusarium solani subsp. pisi) protein is Aldo-keto reductase NECHADRAFT_45914.